Reading from the N-terminus, the 681-residue chain is DNA-directed RNA polymerase subunit beta' (681 aa).

Positions 69, 71, 87, and 90 each coordinate Zn(2+). Asp-489, Asp-491, and Asp-493 together coordinate Mg(2+).

This sequence belongs to the RNA polymerase beta' chain family. RpoC1 subfamily. In plastids the minimal PEP RNA polymerase catalytic core is composed of four subunits: alpha, beta, beta', and beta''. When a (nuclear-encoded) sigma factor is associated with the core the holoenzyme is formed, which can initiate transcription. The cofactor is Mg(2+). Zn(2+) is required as a cofactor.

The protein resides in the plastid. It localises to the chloroplast. It catalyses the reaction RNA(n) + a ribonucleoside 5'-triphosphate = RNA(n+1) + diphosphate. In terms of biological role, DNA-dependent RNA polymerase catalyzes the transcription of DNA into RNA using the four ribonucleoside triphosphates as substrates. This Nicotiana sylvestris (Wood tobacco) protein is DNA-directed RNA polymerase subunit beta'.